The primary structure comprises 354 residues: Ferrochelatase (354 aa).

Residues His214 and Glu295 each coordinate Fe cation.

Belongs to the ferrochelatase family.

The protein resides in the cytoplasm. It carries out the reaction heme b + 2 H(+) = protoporphyrin IX + Fe(2+). It participates in porphyrin-containing compound metabolism; protoheme biosynthesis; protoheme from protoporphyrin-IX: step 1/1. Its function is as follows. Catalyzes the ferrous insertion into protoporphyrin IX. In Burkholderia vietnamiensis (strain G4 / LMG 22486) (Burkholderia cepacia (strain R1808)), this protein is Ferrochelatase.